A 121-amino-acid chain; its full sequence is UPF0344 protein BCE_1257 (121 aa).

A run of 4 helical transmembrane segments spans residues Ile6 to Gly26, Leu38 to Ala58, Trp65 to Val85, and Pro92 to Leu112.

Belongs to the UPF0344 family.

The protein resides in the cell membrane. This Bacillus cereus (strain ATCC 10987 / NRS 248) protein is UPF0344 protein BCE_1257.